Here is a 37-residue protein sequence, read N- to C-terminus: Large ribosomal subunit protein bL36c (37 aa).

Belongs to the bacterial ribosomal protein bL36 family.

The protein resides in the plastid. Its subcellular location is the chloroplast. The chain is Large ribosomal subunit protein bL36c (rpl36) from Euglena gracilis.